The primary structure comprises 116 residues: Phosphoribosyl-AMP cyclohydrolase (116 aa).

D82 is a Mg(2+) binding site. Residue C83 participates in Zn(2+) binding. Residues D84 and D86 each coordinate Mg(2+). Zn(2+)-binding residues include C99 and C106.

It belongs to the PRA-CH family. In terms of assembly, homodimer. It depends on Mg(2+) as a cofactor. Zn(2+) is required as a cofactor.

The protein resides in the cytoplasm. The enzyme catalyses 1-(5-phospho-beta-D-ribosyl)-5'-AMP + H2O = 1-(5-phospho-beta-D-ribosyl)-5-[(5-phospho-beta-D-ribosylamino)methylideneamino]imidazole-4-carboxamide. It participates in amino-acid biosynthesis; L-histidine biosynthesis; L-histidine from 5-phospho-alpha-D-ribose 1-diphosphate: step 3/9. Catalyzes the hydrolysis of the adenine ring of phosphoribosyl-AMP. This is Phosphoribosyl-AMP cyclohydrolase from Saccharopolyspora erythraea (strain ATCC 11635 / DSM 40517 / JCM 4748 / NBRC 13426 / NCIMB 8594 / NRRL 2338).